The following is a 142-amino-acid chain: Large ribosomal subunit protein uL11 (142 aa).

This sequence belongs to the universal ribosomal protein uL11 family. In terms of assembly, part of the ribosomal stalk of the 50S ribosomal subunit. Interacts with L10 and the large rRNA to form the base of the stalk. L10 forms an elongated spine to which L12 dimers bind in a sequential fashion forming a multimeric L10(L12)X complex. One or more lysine residues are methylated.

Functionally, forms part of the ribosomal stalk which helps the ribosome interact with GTP-bound translation factors. The chain is Large ribosomal subunit protein uL11 from Shigella boydii serotype 4 (strain Sb227).